Here is a 568-residue protein sequence, read N- to C-terminus: Sphingosine-1-phosphate lyase 1 (568 aa).

At 1 to 41 (MPSTDLLKLKDFEPYLEILEAYSTKAKNYVNGYCTKYEPWQ) the chain is on the lumenal side. A helical; Signal-anchor for type III membrane protein membrane pass occupies residues 42–62 (LIAGSVLCTLLVVWVYELIFQ). Over 63 to 568 (PESLWSRFKN…NQMNGSPKPR (506 aa)) the chain is Cytoplasmic. Position 353 is an N6-(pyridoxal phosphate)lysine; alternate (K353). K353 carries the post-translational modification N6-acetyllysine; alternate. 3'-nitrotyrosine occurs at positions 356 and 366. The residue at position 564 (S564) is a Phosphoserine.

The protein belongs to the group II decarboxylase family. Sphingosine-1-phosphate lyase subfamily. As to quaternary structure, homodimer. Requires pyridoxal 5'-phosphate as cofactor.

The protein resides in the endoplasmic reticulum membrane. It carries out the reaction sphinganine 1-phosphate = hexadecanal + phosphoethanolamine. The enzyme catalyses sphing-4-enine 1-phosphate = (2E)-hexadecenal + phosphoethanolamine. The protein operates within lipid metabolism; sphingolipid metabolism. Cleaves phosphorylated sphingoid bases (PSBs), such as sphingosine-1-phosphate, into fatty aldehydes and phosphoethanolamine. Elevates stress-induced ceramide production and apoptosis. Required for global lipid homeostasis in liver and cholesterol homeostasis in fibroblasts. Involved in the regulation of pro-inflammatory response and neutrophil trafficking. Modulates neuronal autophagy via phosphoethanolamine production which regulates accumulation of aggregate-prone proteins such as APP. Seems to play a role in establishing neuronal contact sites and axonal maintenance. This is Sphingosine-1-phosphate lyase 1 from Rattus norvegicus (Rat).